The primary structure comprises 95 residues: uncharacterized protein (95 aa).

Positions 2 to 92 (VREAAMLHIK…YTPFPTVEHF (91 aa)) constitute an ABM domain.

This is an uncharacterized protein from Bacillus subtilis (strain 168).